The sequence spans 206 residues: Uridine kinase (206 aa).

Position 9–16 (9–16 (GGSGSGKT)) interacts with ATP.

It belongs to the uridine kinase family.

It is found in the cytoplasm. It catalyses the reaction uridine + ATP = UMP + ADP + H(+). The enzyme catalyses cytidine + ATP = CMP + ADP + H(+). Its pathway is pyrimidine metabolism; CTP biosynthesis via salvage pathway; CTP from cytidine: step 1/3. The protein operates within pyrimidine metabolism; UMP biosynthesis via salvage pathway; UMP from uridine: step 1/1. The sequence is that of Uridine kinase from Borrelia duttonii (strain Ly).